Consider the following 28-residue polypeptide: Heat shock protein 81 (28 aa).

Asn5 and Asp21 together coordinate ATP.

This sequence belongs to the heat shock protein 90 family. Homodimer.

Its subcellular location is the cytoplasm. Its function is as follows. Putative molecular chaperone that may promote the maturation, structural maintenance and proper regulation of specific target proteins. The sequence is that of Heat shock protein 81 from Pseudotsuga menziesii (Douglas-fir).